The following is a 131-amino-acid chain: D-ribose pyranase (131 aa).

The active-site Proton donor is the histidine 20. Residues aspartate 28, histidine 98, and 120-122 (YAN) each bind substrate.

Belongs to the RbsD / FucU family. RbsD subfamily. In terms of assembly, homodecamer.

The protein resides in the cytoplasm. The catalysed reaction is beta-D-ribopyranose = beta-D-ribofuranose. The protein operates within carbohydrate metabolism; D-ribose degradation; D-ribose 5-phosphate from beta-D-ribopyranose: step 1/2. In terms of biological role, catalyzes the interconversion of beta-pyran and beta-furan forms of D-ribose. In Laribacter hongkongensis (strain HLHK9), this protein is D-ribose pyranase.